The primary structure comprises 485 residues: Glutamate--tRNA ligase (485 aa).

Residues 11–21 (PSPTGLLHIGN) carry the 'HIGH' region motif. The short motif at 255–259 (KLSKR) is the 'KMSKS' region element. Residue K258 participates in ATP binding.

Belongs to the class-I aminoacyl-tRNA synthetase family. Glutamate--tRNA ligase type 1 subfamily. In terms of assembly, monomer.

It localises to the cytoplasm. It catalyses the reaction tRNA(Glu) + L-glutamate + ATP = L-glutamyl-tRNA(Glu) + AMP + diphosphate. Catalyzes the attachment of glutamate to tRNA(Glu) in a two-step reaction: glutamate is first activated by ATP to form Glu-AMP and then transferred to the acceptor end of tRNA(Glu). The chain is Glutamate--tRNA ligase from Streptococcus gordonii (strain Challis / ATCC 35105 / BCRC 15272 / CH1 / DL1 / V288).